A 615-amino-acid chain; its full sequence is MSKKFAHTQEELEKLSLKELENLAASMREKIIQVVSKNGGHLSSNLGAVELSIAMHLVFDAKKDPFIFDVSHQSYTHKLLSGKEEIFDTLRQINGLSGYTKPSEGDYFVAGHSSTSISLAVGACKAIALKGEKRIPVALIGDGALSAGMAYEALNELGDSKFACVILLNDNEMSISKPIGAISKYLSQAMATQFYQSFKKRIAKMLDILPDSATYMAKRFEESFKLITPGLLFEELGLEYIGPIDGHNLGEIISALKQAKAMQKPCVIHAQTIKGKGYALAEGKHAKWHGVGAFDIDSGESVKKSDAKKSATEIFSKNLLDLASKYENIVGVTAAMPSGTGLDKLIEKYPNRFWDVAIAEQHAVTSMAAMAKEGFKPFIAIYSTFLQRAYDQVIHDCAIMNLNVVFAMDRAGIVGEDGETHQGVFDLSFLAPLPNFTLLAPRDEQMMQNIMEYAYLHQGPIAFRYPRGSFILDKEFNPCEIKLGKAQWLVKNNSEIAFLGYGQGVAKAWQVLRALQEMNNNANLIDLIFAKPLDEELLCELAKKSKIWFIFSENVKIGGIESLINNFLQKYDLHVKVVSFEYEDKFIEHGKTSEVEKNLEKDVNSLLTKVLKFYH.

Residues His72 and 111–113 (GHS) contribute to the thiamine diphosphate site. Residue Asp142 coordinates Mg(2+). Thiamine diphosphate is bound by residues 143 to 144 (GA), Asn171, Tyr278, and Glu360. Mg(2+) is bound at residue Asn171.

This sequence belongs to the transketolase family. DXPS subfamily. As to quaternary structure, homodimer. Mg(2+) is required as a cofactor. Requires thiamine diphosphate as cofactor.

It catalyses the reaction D-glyceraldehyde 3-phosphate + pyruvate + H(+) = 1-deoxy-D-xylulose 5-phosphate + CO2. The protein operates within metabolic intermediate biosynthesis; 1-deoxy-D-xylulose 5-phosphate biosynthesis; 1-deoxy-D-xylulose 5-phosphate from D-glyceraldehyde 3-phosphate and pyruvate: step 1/1. Catalyzes the acyloin condensation reaction between C atoms 2 and 3 of pyruvate and glyceraldehyde 3-phosphate to yield 1-deoxy-D-xylulose-5-phosphate (DXP). The protein is 1-deoxy-D-xylulose-5-phosphate synthase of Campylobacter jejuni subsp. jejuni serotype O:6 (strain 81116 / NCTC 11828).